The primary structure comprises 183 residues: tRNA-splicing endonuclease (183 aa).

Catalysis depends on residues Tyr120, His128, and Lys159.

Belongs to the tRNA-intron endonuclease family. Archaeal short subfamily. In terms of assembly, homotetramer; although the tetramer contains four active sites, only two participate in the cleavage. Therefore, it should be considered as a dimer of dimers.

The enzyme catalyses pretRNA = a 3'-half-tRNA molecule with a 5'-OH end + a 5'-half-tRNA molecule with a 2',3'-cyclic phosphate end + an intron with a 2',3'-cyclic phosphate and a 5'-hydroxyl terminus.. Functionally, endonuclease that removes tRNA introns. Cleaves pre-tRNA at the 5'- and 3'-splice sites to release the intron. The products are an intron and two tRNA half-molecules bearing 2',3' cyclic phosphate and 5'-OH termini. Recognizes a pseudosymmetric substrate in which 2 bulged loops of 3 bases are separated by a stem of 4 bp. This Pyrobaculum arsenaticum (strain DSM 13514 / JCM 11321 / PZ6) protein is tRNA-splicing endonuclease.